The chain runs to 288 residues: Protein CREG2 (288 aa).

An N-terminal signal peptide occupies residues Met1–Gly31. The interval Ala78 to Arg100 is disordered. An N-linked (GlcNAc...) asparagine glycan is attached at Asn164.

It belongs to the CREG family. In terms of tissue distribution, brain specific.

The protein localises to the secreted. The chain is Protein CREG2 (Creg2) from Mus musculus (Mouse).